A 370-amino-acid polypeptide reads, in one-letter code: 3-dehydroquinate synthase (370 aa).

Residues 108-112 (GVIGD), 132-133 (TT), Lys145, and Lys154 each bind NAD(+). Residues Glu187, His249, and His267 each coordinate Zn(2+).

The protein belongs to the sugar phosphate cyclases superfamily. Dehydroquinate synthase family. It depends on Co(2+) as a cofactor. Zn(2+) serves as cofactor. The cofactor is NAD(+).

The protein localises to the cytoplasm. It carries out the reaction 7-phospho-2-dehydro-3-deoxy-D-arabino-heptonate = 3-dehydroquinate + phosphate. The protein operates within metabolic intermediate biosynthesis; chorismate biosynthesis; chorismate from D-erythrose 4-phosphate and phosphoenolpyruvate: step 2/7. In terms of biological role, catalyzes the conversion of 3-deoxy-D-arabino-heptulosonate 7-phosphate (DAHP) to dehydroquinate (DHQ). This chain is 3-dehydroquinate synthase, found in Cereibacter sphaeroides (strain ATCC 17029 / ATH 2.4.9) (Rhodobacter sphaeroides).